Consider the following 925-residue polypeptide: Nonribosomal peptide synthetase apvA (925 aa).

The adenylation (A) domain stretch occupies residues 15–436 (AREDSGHVVV…TGRAKENMII (422 aa)). Positions 564 to 644 (EPQNDLEKTL…DLATALEKLQ (81 aa)) constitute a Carrier domain. Position 601 is an O-(pantetheine 4'-phosphoryl)serine (serine 601). Residues 663-909 (PLWLVHPGAG…HYSMIGPDHV (247 aa)) are thioesterase (TE) domain.

Belongs to the NRP synthetase family. As to expression, apvA specifically produces aspulvinone E in hyphea, in contrast to melA which produces aspulvinone E in conidia where it is converted to UV-protective Asp-melanin.

It catalyses the reaction 2 3-(4-hydroxyphenyl)pyruvate + AH2 + 2 ATP + O2 = aspulvinone E + A + 2 AMP + CO2 + 2 diphosphate + H2O + H(+). The protein operates within secondary metabolite biosynthesis. In terms of biological role, nonribosomal peptide synthetase; part of the gene cluster that mediates the biosynthesis of aspulvinones. The nonribosomal peptide synthetase apvA is responsible for the production of aspulvinone E, the core structure of aspulvinones. ApvA first activates 4-hydroxyphenylpyruvate (HPPA) through its A domain to AMP-HPPA. The HPPA unit is then loaded to the T domain and eventually transferred to the TE domain. Upon loading of another HPPA unit to the T domain, the TE domain promotes the enolate formation on the unit attached. The next step involves head to tail Claisen condensation, followed by the keto-enol tautermerization and a nucleophilic attack on the carbonyl carbon to yield the furanone partial structure. A spontaneous oxidation at the beta-carbon of the thioester might occur in aerobic condition. The TE domain then catalyzes the hydrolysis of the thioester, followed by spontaneous decarboxylation, dehydroxylation and keto-enol tautermerization to give the aspulvinone core. Aspulvinone E is highly unstable and converted to isoaspulvinone E in the presence of light. The structural diversity of the aspulvinones suggests that other tailoring enzymes are involved and have still to be identified. This chain is Nonribosomal peptide synthetase apvA, found in Aspergillus terreus (strain NIH 2624 / FGSC A1156).